Consider the following 106-residue polypeptide: Small ribosomal subunit protein uS10 (106 aa).

This sequence belongs to the universal ribosomal protein uS10 family. As to quaternary structure, part of the 30S ribosomal subunit.

Involved in the binding of tRNA to the ribosomes. This is Small ribosomal subunit protein uS10 from Pyrobaculum aerophilum (strain ATCC 51768 / DSM 7523 / JCM 9630 / CIP 104966 / NBRC 100827 / IM2).